The sequence spans 221 residues: Keratin-associated protein 10-3 (221 aa).

18 consecutive repeat copies span residues Cys26–Pro30, Cys31–Ser35, Cys36–Ala40, Cys57–Ala61, Cys79–Ser83, Cys89–Ser93, Cys99–Val103, Cys104–Val108, Cys109–Val113, Cys114–Val118, Cys119–Ile123, Cys124–Val128, Cys136–Ser140, Cys146–Ser150, Cys151–Ser155, Cys177–Ala181, Cys188–Ala192, and Cys210–Ser214. The 18 X 5 AA repeats of C-C-X(3) stretch occupies residues Cys26–Ser214.

It belongs to the KRTAP type 10 family. Interacts with hair keratins. Restricted to a narrow region of the hair fiber cuticle, lying approximately 20 cell layers above the apex of the dermal papilla of the hair root; not detected in any other tissues.

Functionally, in the hair cortex, hair keratin intermediate filaments are embedded in an interfilamentous matrix, consisting of hair keratin-associated proteins (KRTAP), which are essential for the formation of a rigid and resistant hair shaft through their extensive disulfide bond cross-linking with abundant cysteine residues of hair keratins. The matrix proteins include the high-sulfur and high-glycine-tyrosine keratins. This Homo sapiens (Human) protein is Keratin-associated protein 10-3 (KRTAP10-3).